The following is a 1332-amino-acid chain: Aldehyde oxidase 1 (1332 aa).

One can recognise a 2Fe-2S ferredoxin-type domain in the interval serine 4–valine 91. Residues cysteine 43, cysteine 48, cysteine 51, and cysteine 73 each contribute to the [2Fe-2S] cluster site. A Mo-molybdopterin-binding site is contributed by glutamine 112. Cysteine 113, cysteine 116, cysteine 148, and cysteine 150 together coordinate [2Fe-2S] cluster. Residue cysteine 150 participates in Mo-molybdopterin binding. The FAD-binding PCMH-type domain maps to phenylalanine 234–lysine 419. FAD is bound by residues valine 262–valine 269, alanine 343, serine 352, histidine 356, aspartate 365, and leucine 409. Mo-molybdopterin is bound by residues alanine 800–phenylalanine 801, methionine 1041, glycine 1082–valine 1085, glutamine 1197, and leucine 1262. Residue glutamate 1264 is the Proton acceptor; for azaheterocycle hydroxylase activity of the active site.

Belongs to the xanthine dehydrogenase family. In terms of assembly, homodimer. [2Fe-2S] cluster serves as cofactor. Requires FAD as cofactor. Mo-molybdopterin is required as a cofactor. As to expression, expressed in liver.

Its subcellular location is the cytoplasm. The catalysed reaction is an aldehyde + O2 + H2O = a carboxylate + H2O2 + H(+). The enzyme catalyses retinal + O2 + H2O = retinoate + H2O2 + H(+). Its activity is regulated as follows. Inhibited by menadione and isovanillin. Not inhibited by allopurinol, a xanthine dehydrogenase potent inhibitor. Functionally, oxidase with broad substrate specificity, oxidizing aromatic azaheterocycles, such as N1-methylnicotinamide, N-methylphthalazinium and phthalazine, as well as aldehydes, such as benzaldehyde, retinal, pyridoxal, and vanillin. Plays a key role in the metabolism of xenobiotics and drugs containing aromatic azaheterocyclic substituents. Participates in the bioactivation of prodrugs such as famciclovir, catalyzing the oxidation step from 6-deoxypenciclovir to penciclovir, which is a potent antiviral agent. Is probably involved in the regulation of reactive oxygen species homeostasis. May be a prominent source of superoxide generation via the one-electron reduction of molecular oxygen. May also catalyze nitric oxide (NO) production via the reduction of nitrite to NO with NADH or aldehyde as electron donor. May play a role in adipogenesis. This Cavia porcellus (Guinea pig) protein is Aldehyde oxidase 1.